Here is a 386-residue protein sequence, read N- to C-terminus: Succinate--CoA ligase [ADP-forming] subunit beta (386 aa).

In terms of domain architecture, ATP-grasp spans Lys-9–Glu-244. ATP-binding positions include Lys-46, Gly-53–Gly-55, Glu-99, Ala-102, and Glu-107. Mg(2+) contacts are provided by Asn-199 and Asp-213. Residues Asn-264 and Gly-321 to Met-323 each bind substrate.

This sequence belongs to the succinate/malate CoA ligase beta subunit family. In terms of assembly, heterotetramer of two alpha and two beta subunits. Mg(2+) is required as a cofactor.

The enzyme catalyses succinate + ATP + CoA = succinyl-CoA + ADP + phosphate. The catalysed reaction is GTP + succinate + CoA = succinyl-CoA + GDP + phosphate. It functions in the pathway carbohydrate metabolism; tricarboxylic acid cycle; succinate from succinyl-CoA (ligase route): step 1/1. In terms of biological role, succinyl-CoA synthetase functions in the citric acid cycle (TCA), coupling the hydrolysis of succinyl-CoA to the synthesis of either ATP or GTP and thus represents the only step of substrate-level phosphorylation in the TCA. The beta subunit provides nucleotide specificity of the enzyme and binds the substrate succinate, while the binding sites for coenzyme A and phosphate are found in the alpha subunit. This Acidovorax ebreus (strain TPSY) (Diaphorobacter sp. (strain TPSY)) protein is Succinate--CoA ligase [ADP-forming] subunit beta.